The chain runs to 383 residues: Dihydroorotase (383 aa).

H47 and H49 together coordinate Zn(2+). Substrate contacts are provided by residues 49–51 (HFR) and N81. Zn(2+)-binding residues include K128, H159, H198, and D264. Position 128 is an N6-carboxylysine (K128). The active site involves D264. Substrate-binding positions include H268 and 280–281 (PG).

It belongs to the metallo-dependent hydrolases superfamily. DHOase family. Class I DHOase subfamily. Zn(2+) serves as cofactor.

It carries out the reaction (S)-dihydroorotate + H2O = N-carbamoyl-L-aspartate + H(+). It participates in pyrimidine metabolism; UMP biosynthesis via de novo pathway; (S)-dihydroorotate from bicarbonate: step 3/3. Its function is as follows. Catalyzes the reversible cyclization of carbamoyl aspartate to dihydroorotate. The sequence is that of Dihydroorotase from Pyrobaculum aerophilum (strain ATCC 51768 / DSM 7523 / JCM 9630 / CIP 104966 / NBRC 100827 / IM2).